Consider the following 364-residue polypeptide: Matrix protein (364 aa).

The FPIV motif signature appears at 23–26 (FPIV).

Belongs to the morbillivirus/respirovirus/rubulavirus M protein family.

It is found in the virion. The M protein has a crucial role in virus assembly and interacts with the RNP complex as well as with the viral membrane. This chain is Matrix protein (M), found in Gallus gallus (Chicken).